Here is a 514-residue protein sequence, read N- to C-terminus: ATP synthase subunit alpha 2 (514 aa).

170–177 (GDRQTGKT) serves as a coordination point for ATP.

This sequence belongs to the ATPase alpha/beta chains family. In terms of assembly, F-type ATPases have 2 components, CF(1) - the catalytic core - and CF(0) - the membrane proton channel. CF(1) has five subunits: alpha(3), beta(3), gamma(1), delta(1), epsilon(1). CF(0) has three main subunits: a(1), b(2) and c(9-12). The alpha and beta chains form an alternating ring which encloses part of the gamma chain. CF(1) is attached to CF(0) by a central stalk formed by the gamma and epsilon chains, while a peripheral stalk is formed by the delta and b chains.

The protein resides in the cell inner membrane. It catalyses the reaction ATP + H2O + 4 H(+)(in) = ADP + phosphate + 5 H(+)(out). Functionally, produces ATP from ADP in the presence of a proton gradient across the membrane. The alpha chain is a regulatory subunit. The polypeptide is ATP synthase subunit alpha 2 (Hahella chejuensis (strain KCTC 2396)).